The primary structure comprises 161 residues: Endoribonuclease YbeY (161 aa).

Residues H120, H124, and D130 each coordinate Zn(2+).

This sequence belongs to the endoribonuclease YbeY family. Zn(2+) serves as cofactor.

The protein resides in the cytoplasm. In terms of biological role, single strand-specific metallo-endoribonuclease involved in late-stage 70S ribosome quality control and in maturation of the 3' terminus of the 16S rRNA. This chain is Endoribonuclease YbeY, found in Chlamydia muridarum (strain MoPn / Nigg).